A 179-amino-acid chain; its full sequence is Apoptosis regulator DPV022 (179 aa).

A helical membrane pass occupies residues 148–170 (VLITNYLKITIFGAILGITAYYI).

Interacts with host BAX and BAK1.

The protein localises to the host mitochondrion. Its subcellular location is the host membrane. In terms of biological role, plays a role in the inhibition of host apoptosis by sequestering and inactivating several proapoptotic BCL-2 proteins, including BAK1 and BAX. Prevents the conformational activation of both of them. This is Apoptosis regulator DPV022 (DPV022) from Deerpox virus (strain Mule deer/United States/W-848-83/1983) (DPV).